The following is a 143-amino-acid chain: Large ribosomal subunit protein uL11 (143 aa).

The protein belongs to the universal ribosomal protein uL11 family. Part of the ribosomal stalk of the 50S ribosomal subunit. Interacts with L10 and the large rRNA to form the base of the stalk. L10 forms an elongated spine to which L12 dimers bind in a sequential fashion forming a multimeric L10(L12)X complex. In terms of processing, one or more lysine residues are methylated.

In terms of biological role, forms part of the ribosomal stalk which helps the ribosome interact with GTP-bound translation factors. This Cutibacterium acnes (strain DSM 16379 / KPA171202) (Propionibacterium acnes) protein is Large ribosomal subunit protein uL11.